The primary structure comprises 673 residues: uncharacterized protein (673 aa).

The tract at residues 1–95 is disordered; it reads MLNGEKSALG…QSSAIADSIG (95 aa). Residues 13–40 show a composition bias toward low complexity; sequence PSNSNSSSKLNAKSPNFIPSSSNIPRSS. The segment covering 42–60 has biased composition (basic and acidic residues); that stretch reads KTKEHSADRKPHRNSEKKT. The segment at 214–273 adopts an RING-type zinc-finger fold; the sequence is CPFCLEEKPVAARMSRCGHVYCFSCLLRFVETPTAAEVKAAETSGTKIVKCGHRSCPICW. Residues 649 to 673 form a disordered region; it reads SAPSKNSKNKKKKKLVLLSTGAAHR.

The protein resides in the cytoplasm. It is found in the nucleus. This is an uncharacterized protein from Schizosaccharomyces pombe (strain 972 / ATCC 24843) (Fission yeast).